Here is a 197-residue protein sequence, read N- to C-terminus: FMN-dependent NADH:quinone oxidoreductase (197 aa).

Residues serine 10 and 17 to 19 contribute to the FMN site; that span reads SFS.

It belongs to the azoreductase type 1 family. In terms of assembly, homodimer. The cofactor is FMN.

It carries out the reaction 2 a quinone + NADH + H(+) = 2 a 1,4-benzosemiquinone + NAD(+). The enzyme catalyses N,N-dimethyl-1,4-phenylenediamine + anthranilate + 2 NAD(+) = 2-(4-dimethylaminophenyl)diazenylbenzoate + 2 NADH + 2 H(+). Functionally, quinone reductase that provides resistance to thiol-specific stress caused by electrophilic quinones. Also exhibits azoreductase activity. Catalyzes the reductive cleavage of the azo bond in aromatic azo compounds to the corresponding amines. The polypeptide is FMN-dependent NADH:quinone oxidoreductase (Mycoplasmoides gallisepticum (strain R(low / passage 15 / clone 2)) (Mycoplasma gallisepticum)).